We begin with the raw amino-acid sequence, 282 residues long: MKKLSVIFLSVSMLSGIAFADKDKVVATYKGGEVKESQIMKEFKPQLNLQSGETIKNFDDFPPQDQEKLIKIYVNNLLLKEEVAKSNITSSKEFQEKLENAKNQLAQQELLANYIKSNITDKMFDDEYNKYVGNLKGKEQIKVAHILVKSQKEANDIKTKLSKGGNFTKLAEELSLDKASASNGGVIGYILLNQPGQLVPEFEKKAFALKVNEVSTPVKTDFGWHIIKVLEKKPVPIPTKEEAKVTIDNILAAEVLKKYIADLEAKANLKIMLPKADSKAGS.

The signal sequence occupies residues 1 to 20 (MKKLSVIFLSVSMLSGIAFA). The region spanning 138 to 231 (KEQIKVAHIL…FGWHIIKVLE (94 aa)) is the PpiC domain.

It belongs to the PpiC/parvulin rotamase family.

It localises to the cell outer membrane. It catalyses the reaction [protein]-peptidylproline (omega=180) = [protein]-peptidylproline (omega=0). The protein is Parvulin-like PPIase (plp) of Rickettsia conorii (strain ATCC VR-613 / Malish 7).